Consider the following 365-residue polypeptide: DNA replication and repair protein RecF (365 aa).

30 to 37 (GDNGEGKT) is an ATP binding site.

Belongs to the RecF family.

It localises to the cytoplasm. Functionally, the RecF protein is involved in DNA metabolism; it is required for DNA replication and normal SOS inducibility. RecF binds preferentially to single-stranded, linear DNA. It also seems to bind ATP. This chain is DNA replication and repair protein RecF, found in Leptospira interrogans serogroup Icterohaemorrhagiae serovar Lai (strain 56601).